We begin with the raw amino-acid sequence, 186 residues long: MKAVHLYEEIEIPQGINVNIEGMKIKVKGPKGEIEKDFSHISGIEIRKEDNKIVVETTFADRRKKAQFYSIIAHIENMFTGVTKGYRYYLKIIYTHFPVTVKVSGNEVQIQNLIGEKNIRRAKIMTGVKVNVKGEDIIVEGQDIEKVGQTAANIELASKITGYDRRVFADGIYIYKKEVIGSEQTD.

The protein belongs to the universal ribosomal protein uL6 family. Part of the 50S ribosomal subunit.

Functionally, this protein binds to the 23S rRNA, and is important in its secondary structure. It is located near the subunit interface in the base of the L7/L12 stalk, and near the tRNA binding site of the peptidyltransferase center. This chain is Large ribosomal subunit protein uL6, found in Sulfurisphaera tokodaii (strain DSM 16993 / JCM 10545 / NBRC 100140 / 7) (Sulfolobus tokodaii).